The sequence spans 399 residues: 26S proteasome regulatory subunit 10B homolog A (399 aa).

At T2 the chain carries N-acetylthreonine. 180-187 (GPPGTGKT) provides a ligand contact to ATP. Residue K203 forms a Glycyl lysine isopeptide (Lys-Gly) (interchain with G-Cter in ubiquitin) linkage.

This sequence belongs to the AAA ATPase family. In terms of assembly, component of the 19S regulatory particle (RP/PA700) base subcomplex of the 26S proteasome. The 26S proteasome is composed of a core protease (CP), known as the 20S proteasome, capped at one or both ends by the 19S regulatory particle (RP/PA700). The RP/PA700 complex is composed of at least 17 different subunits in two subcomplexes, the base and the lid, which form the portions proximal and distal to the 20S proteolytic core, respectively.

Its subcellular location is the cytoplasm. The protein localises to the nucleus. Functionally, the 26S proteasome is involved in the ATP-dependent degradation of ubiquitinated proteins. The regulatory (or ATPase) complex confers ATP dependency and substrate specificity to the 26S complex. The sequence is that of 26S proteasome regulatory subunit 10B homolog A (RPT4A) from Arabidopsis thaliana (Mouse-ear cress).